The following is a 157-amino-acid chain: Endoribonuclease YbeY (157 aa).

3 residues coordinate Zn(2+): His-111, His-115, and His-121.

Belongs to the endoribonuclease YbeY family. It depends on Zn(2+) as a cofactor.

It is found in the cytoplasm. Its function is as follows. Single strand-specific metallo-endoribonuclease involved in late-stage 70S ribosome quality control and in maturation of the 3' terminus of the 16S rRNA. The protein is Endoribonuclease YbeY of Pseudomonas putida (strain W619).